Consider the following 248-residue polypeptide: DNA repair protein RecO (248 aa).

The protein belongs to the RecO family.

Functionally, involved in DNA repair and RecF pathway recombination. This Streptomyces avermitilis (strain ATCC 31267 / DSM 46492 / JCM 5070 / NBRC 14893 / NCIMB 12804 / NRRL 8165 / MA-4680) protein is DNA repair protein RecO.